We begin with the raw amino-acid sequence, 355 residues long: Histidinol-phosphate aminotransferase 2 (355 aa).

The residue at position 210 (Lys210) is an N6-(pyridoxal phosphate)lysine.

It belongs to the class-II pyridoxal-phosphate-dependent aminotransferase family. Histidinol-phosphate aminotransferase subfamily. In terms of assembly, homodimer. Pyridoxal 5'-phosphate serves as cofactor.

It catalyses the reaction L-histidinol phosphate + 2-oxoglutarate = 3-(imidazol-4-yl)-2-oxopropyl phosphate + L-glutamate. The protein operates within amino-acid biosynthesis; L-histidine biosynthesis; L-histidine from 5-phospho-alpha-D-ribose 1-diphosphate: step 7/9. The protein is Histidinol-phosphate aminotransferase 2 of Gluconobacter oxydans (strain 621H) (Gluconobacter suboxydans).